Here is a 158-residue protein sequence, read N- to C-terminus: Endoribonuclease YbeY (158 aa).

Residues His-124, His-128, and His-134 each coordinate Zn(2+).

This sequence belongs to the endoribonuclease YbeY family. It depends on Zn(2+) as a cofactor.

The protein resides in the cytoplasm. Single strand-specific metallo-endoribonuclease involved in late-stage 70S ribosome quality control and in maturation of the 3' terminus of the 16S rRNA. The polypeptide is Endoribonuclease YbeY (Caldanaerobacter subterraneus subsp. tengcongensis (strain DSM 15242 / JCM 11007 / NBRC 100824 / MB4) (Thermoanaerobacter tengcongensis)).